Consider the following 87-residue polypeptide: MVKLRLKRYGRKQQPTYRIIAIDVKSRRQGRALKEVGFYDPRKDQTHLDVATIITFIQQGAQPTDTVSHILNRAGVFEQIHAMSIHE.

This sequence belongs to the bacterial ribosomal protein bS16 family.

It is found in the plastid. It localises to the chloroplast. This is Small ribosomal subunit protein bS16c from Zygnema circumcarinatum (Green alga).